Consider the following 296-residue polypeptide: POM121-like protein 12 (296 aa).

Disordered stretches follow at residues 1-54 (MGAA…SPWP) and 142-162 (APPE…RPAG). Residues 34–52 (SRSPSTPQTTPSPQGRQSP) show a composition bias toward low complexity.

The protein belongs to the POM121 family.

This Homo sapiens (Human) protein is POM121-like protein 12 (POM121L12).